Reading from the N-terminus, the 381-residue chain is Erythronate-4-phosphate dehydrogenase (381 aa).

Positions 45 and 67 each coordinate substrate. Residues 127–128 (QV), D147, and T176 each bind NAD(+). Residue R209 is part of the active site. Position 233 (D233) interacts with NAD(+). E238 is an active-site residue. The active-site Proton donor is H255. An NAD(+)-binding site is contributed by G258. Position 259 (Y259) interacts with substrate.

It belongs to the D-isomer specific 2-hydroxyacid dehydrogenase family. PdxB subfamily. Homodimer.

It is found in the cytoplasm. It catalyses the reaction 4-phospho-D-erythronate + NAD(+) = (R)-3-hydroxy-2-oxo-4-phosphooxybutanoate + NADH + H(+). It participates in cofactor biosynthesis; pyridoxine 5'-phosphate biosynthesis; pyridoxine 5'-phosphate from D-erythrose 4-phosphate: step 2/5. Its function is as follows. Catalyzes the oxidation of erythronate-4-phosphate to 3-hydroxy-2-oxo-4-phosphonooxybutanoate. This Vibrio cholerae serotype O1 (strain ATCC 39315 / El Tor Inaba N16961) protein is Erythronate-4-phosphate dehydrogenase.